A 279-amino-acid chain; its full sequence is MAFQGTSRTLTQQSSAATSDDLQKILFSPEAIKKMATECDLGRHHWMRADNAISVRPLVPEVTHGRIASFFKSGYDVGELCSKGYMSVPQVLCAVTRTVSTDAEGSLRIYLADLGDKELSPIDGQCVSLHNHDLPALVSFQPTYDCPMETVGNRKRCFAVVIERHGYIGYTGTTASVCSNWQARFSSKNNNYTHIAAGKTLVLPFNRLAEQTKPSAVARLLKSQLNNIESSQYLLTNAKINQNARSESEDLNVESPPAAIGSSSASRSEAFRPQVVNGL.

Residues 246 to 279 (SESEDLNVESPPAAIGSSSASRSEAFRPQVVNGL) form a disordered region. Residues 254 to 268 (ESPPAAIGSSSASRS) show a composition bias toward low complexity.

Belongs to the cucumovirus movement protein family.

The protein localises to the host cell junction. The protein resides in the host plasmodesma. In terms of biological role, transports viral genome to neighboring plant cells directly through plasmosdesmata, without any budding. The movement protein allows efficient cell to cell propagation, by bypassing the host cell wall barrier. Acts by forming a tubular structure at the host plasmodesmata, enlarging it enough to allow free passage of virion capsids. The polypeptide is Movement protein (Cucurbita pepo (Vegetable marrow)).